The primary structure comprises 282 residues: tRNA uridine(34) hydroxylase (282 aa).

In terms of domain architecture, Rhodanese spans 128-222 (EGRPVVMLDT…YFEEVGGSHY (95 aa)). The active-site Cysteine persulfide intermediate is the cysteine 182.

It belongs to the TrhO family.

The enzyme catalyses uridine(34) in tRNA + AH2 + O2 = 5-hydroxyuridine(34) in tRNA + A + H2O. Its function is as follows. Catalyzes oxygen-dependent 5-hydroxyuridine (ho5U) modification at position 34 in tRNAs. The sequence is that of tRNA uridine(34) hydroxylase from Cupriavidus necator (strain ATCC 17699 / DSM 428 / KCTC 22496 / NCIMB 10442 / H16 / Stanier 337) (Ralstonia eutropha).